The sequence spans 166 residues: NAD(P)H-quinone oxidoreductase subunit I, chloroplastic (166 aa).

2 consecutive 4Fe-4S ferredoxin-type domains span residues 55-84 (GRIH…VDWK) and 95-124 (LNYS…MTEE). Residues C64, C67, C70, C74, C104, C107, C110, and C114 each contribute to the [4Fe-4S] cluster site.

This sequence belongs to the complex I 23 kDa subunit family. NDH is composed of at least 16 different subunits, 5 of which are encoded in the nucleus. Requires [4Fe-4S] cluster as cofactor.

It localises to the plastid. The protein localises to the chloroplast thylakoid membrane. It carries out the reaction a plastoquinone + NADH + (n+1) H(+)(in) = a plastoquinol + NAD(+) + n H(+)(out). It catalyses the reaction a plastoquinone + NADPH + (n+1) H(+)(in) = a plastoquinol + NADP(+) + n H(+)(out). NDH shuttles electrons from NAD(P)H:plastoquinone, via FMN and iron-sulfur (Fe-S) centers, to quinones in the photosynthetic chain and possibly in a chloroplast respiratory chain. The immediate electron acceptor for the enzyme in this species is believed to be plastoquinone. Couples the redox reaction to proton translocation, and thus conserves the redox energy in a proton gradient. The sequence is that of NAD(P)H-quinone oxidoreductase subunit I, chloroplastic from Ambrosia trifida (Giant ragweed).